Consider the following 101-residue polypeptide: uncharacterized protein (101 aa).

This is an uncharacterized protein from Bacillus subtilis (strain 168).